A 394-amino-acid chain; its full sequence is MSQIQTRTEPMVINMGPHHPSMHGVLRLIVTLDGEDVIDCEPVIGYLHRGMEKIAENRTNTMFVPYVSRWDYAAGMFNEAVTVNAPEQLADIAVPKRASYIRVIMLELNRIANHLLWLGPFLADVGAQTPFFYIFREREMIYDLWEAATGYRMVNNNYFRIGGVAADLPYGWVDKCEDFCDYFLPKVDEYERLITNNPIFRRRIMGLGVISREEAINWGLSGPMLRASGVKWDLRKVDHYECYDDFDWEVHWEKDGDCLARYLVRIREMRESVNIIRQAIKGLPGGPYENLEAKRMAEGPKSEWNDFDYQFLGKKIPPTFKIPKGEHYVRIESGKGEIGIYIIGDNNIFPWRFKIRAADFVNLQIFPHILQGAKVADLVAILGSIDIIMGSVDR.

This sequence belongs to the complex I 49 kDa subunit family. In terms of assembly, NDH-1 can be composed of about 15 different subunits; different subcomplexes with different compositions have been identified which probably have different functions.

The protein localises to the cellular thylakoid membrane. It carries out the reaction a plastoquinone + NADH + (n+1) H(+)(in) = a plastoquinol + NAD(+) + n H(+)(out). It catalyses the reaction a plastoquinone + NADPH + (n+1) H(+)(in) = a plastoquinol + NADP(+) + n H(+)(out). In terms of biological role, NDH-1 shuttles electrons from an unknown electron donor, via FMN and iron-sulfur (Fe-S) centers, to quinones in the respiratory and/or the photosynthetic chain. The immediate electron acceptor for the enzyme in this species is believed to be plastoquinone. Couples the redox reaction to proton translocation, and thus conserves the redox energy in a proton gradient. Cyanobacterial NDH-1 also plays a role in inorganic carbon-concentration. This chain is NAD(P)H-quinone oxidoreductase subunit H, found in Trichodesmium erythraeum (strain IMS101).